The sequence spans 128 residues: Sulfurtransferase TusD (128 aa).

Cysteine 78 functions as the Cysteine persulfide intermediate in the catalytic mechanism.

The protein belongs to the DsrE/TusD family. Heterohexamer, formed by a dimer of trimers. The hexameric TusBCD complex contains 2 copies each of TusB, TusC and TusD. The TusBCD complex interacts with TusE.

Its subcellular location is the cytoplasm. Part of a sulfur-relay system required for 2-thiolation of 5-methylaminomethyl-2-thiouridine (mnm(5)s(2)U) at tRNA wobble positions. Accepts sulfur from TusA and transfers it in turn to TusE. The chain is Sulfurtransferase TusD from Salmonella newport (strain SL254).